The chain runs to 157 residues: Protein Smg homolog (157 aa).

This sequence belongs to the Smg family.

This is Protein Smg homolog from Shewanella frigidimarina (strain NCIMB 400).